We begin with the raw amino-acid sequence, 833 residues long: Leucine--tRNA ligase (833 aa).

The 'HIGH' region motif lies at 41–52; the sequence is PYPSGAGLHVGH. The short motif at 610-614 is the 'KMSKS' region element; sequence KMSKS. Lys613 is a binding site for ATP.

The protein belongs to the class-I aminoacyl-tRNA synthetase family.

It is found in the cytoplasm. It catalyses the reaction tRNA(Leu) + L-leucine + ATP = L-leucyl-tRNA(Leu) + AMP + diphosphate. The polypeptide is Leucine--tRNA ligase (Streptococcus pyogenes serotype M5 (strain Manfredo)).